The primary structure comprises 440 residues: 3-phosphoshikimate 1-carboxyvinyltransferase (440 aa).

K26, S27, and R31 together coordinate 3-phosphoshikimate. A phosphoenolpyruvate-binding site is contributed by K26. Positions 99 and 127 each coordinate phosphoenolpyruvate. 3-phosphoshikimate contacts are provided by S172, Q174, D320, and K347. Q174 contacts phosphoenolpyruvate. D320 acts as the Proton acceptor in catalysis. Positions 351 and 392 each coordinate phosphoenolpyruvate.

It belongs to the EPSP synthase family. In terms of assembly, monomer.

Its subcellular location is the cytoplasm. The enzyme catalyses 3-phosphoshikimate + phosphoenolpyruvate = 5-O-(1-carboxyvinyl)-3-phosphoshikimate + phosphate. The protein operates within metabolic intermediate biosynthesis; chorismate biosynthesis; chorismate from D-erythrose 4-phosphate and phosphoenolpyruvate: step 6/7. In terms of biological role, catalyzes the transfer of the enolpyruvyl moiety of phosphoenolpyruvate (PEP) to the 5-hydroxyl of shikimate-3-phosphate (S3P) to produce enolpyruvyl shikimate-3-phosphate and inorganic phosphate. The polypeptide is 3-phosphoshikimate 1-carboxyvinyltransferase (Xanthomonas axonopodis pv. citri (strain 306)).